Reading from the N-terminus, the 433-residue chain is 4-hydroxy-3-methylbut-2-en-1-yl diphosphate synthase (flavodoxin) (433 aa).

Residues 1 to 10 are compositionally biased toward polar residues; sequence MRYMQDSSMP. A disordered region spans residues 1-24; the sequence is MRYMQDSSMPCQDASPPDVGAAPR. Cysteine 320, cysteine 323, cysteine 366, and glutamate 373 together coordinate [4Fe-4S] cluster.

This sequence belongs to the IspG family. [4Fe-4S] cluster is required as a cofactor.

It catalyses the reaction (2E)-4-hydroxy-3-methylbut-2-enyl diphosphate + oxidized [flavodoxin] + H2O + 2 H(+) = 2-C-methyl-D-erythritol 2,4-cyclic diphosphate + reduced [flavodoxin]. The protein operates within isoprenoid biosynthesis; isopentenyl diphosphate biosynthesis via DXP pathway; isopentenyl diphosphate from 1-deoxy-D-xylulose 5-phosphate: step 5/6. Converts 2C-methyl-D-erythritol 2,4-cyclodiphosphate (ME-2,4cPP) into 1-hydroxy-2-methyl-2-(E)-butenyl 4-diphosphate. The sequence is that of 4-hydroxy-3-methylbut-2-en-1-yl diphosphate synthase (flavodoxin) from Bordetella bronchiseptica (strain ATCC BAA-588 / NCTC 13252 / RB50) (Alcaligenes bronchisepticus).